Consider the following 348-residue polypeptide: Lipooligosaccharide heptosyltransferase 2 (348 aa).

The protein belongs to the glycosyltransferase 9 family.

It carries out the reaction an L-alpha-D-Hep-(1-&gt;5)-[alpha-Kdo-(2-&gt;4)]-alpha-Kdo-(2-&gt;6)-lipid A + ADP-L-glycero-beta-D-manno-heptose = an L-alpha-D-Hep-(1-&gt;3)-L-alpha-D-Hep-(1-&gt;5)-[alpha-Kdo-(2-&gt;4)]-alpha-Kdo-(2-&gt;6)-lipid A + ADP + H(+). It functions in the pathway bacterial outer membrane biogenesis; LOS core biosynthesis. Its function is as follows. Glycosyltransferase involved in the biosynthesis of the core oligosaccharide region of lipooligosaccharide (LOS). Catalyzes the addition of a heptose unit to the heptosyl-Kdo2-lipid A module. The polypeptide is Lipooligosaccharide heptosyltransferase 2 (Haemophilus ducreyi (strain 35000HP / ATCC 700724)).